Reading from the N-terminus, the 333-residue chain is L-lactate dehydrogenase A chain (333 aa).

Position 2 is an N-acetylalanine (alanine 2). NAD(+) is bound by residues 30 to 58 (GAVG…MEDK) and arginine 100. Positions 107, 139, and 170 each coordinate substrate. Residue asparagine 139 coordinates NAD(+). Histidine 194 (proton acceptor) is an active-site residue. Substrate is bound at residue threonine 249.

Belongs to the LDH/MDH superfamily. LDH family. As to quaternary structure, homotetramer.

It is found in the cytoplasm. The enzyme catalyses (S)-lactate + NAD(+) = pyruvate + NADH + H(+). Its pathway is fermentation; pyruvate fermentation to lactate; (S)-lactate from pyruvate: step 1/1. In terms of biological role, interconverts simultaneously and stereospecifically pyruvate and lactate with concomitant interconversion of NADH and NAD(+). This chain is L-lactate dehydrogenase A chain (ldha), found in Squalus acanthias (Spiny dogfish).